A 163-amino-acid chain; its full sequence is Nucleotide-binding protein Mmcs_0777 (163 aa).

It belongs to the YajQ family.

In terms of biological role, nucleotide-binding protein. The chain is Nucleotide-binding protein Mmcs_0777 from Mycobacterium sp. (strain MCS).